The following is a 573-amino-acid chain: DNA polymerase lambda (573 aa).

The BRCT domain maps to 35–131; sequence EARGWLSSLR…RLTDTEGFSL (97 aa). Disordered stretches follow at residues 126–204 and 214–233; these read TEGF…GPQV and TGHYPTPPEEDGGPDPAPEA. Residues 263–277 form a DNA-binding region; sequence KAYSVQGDKWRALGY. Residue K310 is the Schiff-base intermediate with DNA of the active site. A DNA-binding region spans residues 343 to 346; sequence GTKT. DCTP is bound by residues R384, 415 to 418, and 424 to 427; these read SYRR and GDVD. The segment at 418–427 is involved in primer binding; the sequence is RGKMTCGDVD. The Mn(2+) site is built by D425, D427, and D488. Residues 464-503 form a DNA-binding region; sequence ENGQQQKYLGVCRLPGPGKRHRRLDIIVVPYCEFACALLY. Residue N511 participates in dCTP binding.

It belongs to the DNA polymerase type-X family. In terms of assembly, interacts with PCNA. Interacts with PAXX; promoting POLL recruitment to double-strand breaks (DSBs) and stimulation of the end-filling activity of POLL. Interacts with XRCC4; promoting POLL recruitment to double-strand breaks (DSBs) and stimulation of the end-filling activity of POLL. Interacts with NHEJ1/XLF; promoting POLL recruitment to double-strand breaks (DSBs) and stimulation of the end-filling activity of POLL. Requires Mn(2+) as cofactor.

Its subcellular location is the nucleus. The enzyme catalyses DNA(n) + a 2'-deoxyribonucleoside 5'-triphosphate = DNA(n+1) + diphosphate. DNA polymerase that functions in several pathways of DNA repair. Involved in base excision repair (BER) responsible for repair of lesions that give rise to abasic (AP) sites in DNA. Also contributes to DNA double-strand break repair by non-homologous end joining and homologous recombination. Has both template-dependent and template-independent (terminal transferase) DNA polymerase activities. Also has a 5'-deoxyribose-5-phosphate lyase (dRP lyase) activity. This is DNA polymerase lambda from Mus musculus (Mouse).